A 188-amino-acid chain; its full sequence is Shikimate kinase (188 aa).

21 to 26 (GAGKTT) contacts ATP. Thr25 contributes to the Mg(2+) binding site. Substrate is bound by residues Asp43, Arg67, and Gly90. Arg130 contacts ATP. Arg148 is a binding site for substrate.

Belongs to the shikimate kinase family. Monomer. Requires Mg(2+) as cofactor.

The protein resides in the cytoplasm. It catalyses the reaction shikimate + ATP = 3-phosphoshikimate + ADP + H(+). Its pathway is metabolic intermediate biosynthesis; chorismate biosynthesis; chorismate from D-erythrose 4-phosphate and phosphoenolpyruvate: step 5/7. Its function is as follows. Catalyzes the specific phosphorylation of the 3-hydroxyl group of shikimic acid using ATP as a cosubstrate. This is Shikimate kinase from Geobacillus thermodenitrificans (strain NG80-2).